Here is a 238-residue protein sequence, read N- to C-terminus: Pyridoxine 5'-phosphate synthase (238 aa).

Asparagine 7 lines the 3-amino-2-oxopropyl phosphate pocket. Aspartate 9–histidine 10 is a 1-deoxy-D-xylulose 5-phosphate binding site. Arginine 18 serves as a coordination point for 3-amino-2-oxopropyl phosphate. Histidine 43 (proton acceptor) is an active-site residue. 1-deoxy-D-xylulose 5-phosphate-binding residues include arginine 45 and histidine 50. The active-site Proton acceptor is glutamate 70. Threonine 100 contributes to the 1-deoxy-D-xylulose 5-phosphate binding site. Histidine 191 functions as the Proton donor in the catalytic mechanism. Residues glycine 192 and glycine 213–histidine 214 each bind 3-amino-2-oxopropyl phosphate.

This sequence belongs to the PNP synthase family. As to quaternary structure, homooctamer; tetramer of dimers.

The protein localises to the cytoplasm. The catalysed reaction is 3-amino-2-oxopropyl phosphate + 1-deoxy-D-xylulose 5-phosphate = pyridoxine 5'-phosphate + phosphate + 2 H2O + H(+). The protein operates within cofactor biosynthesis; pyridoxine 5'-phosphate biosynthesis; pyridoxine 5'-phosphate from D-erythrose 4-phosphate: step 5/5. In terms of biological role, catalyzes the complicated ring closure reaction between the two acyclic compounds 1-deoxy-D-xylulose-5-phosphate (DXP) and 3-amino-2-oxopropyl phosphate (1-amino-acetone-3-phosphate or AAP) to form pyridoxine 5'-phosphate (PNP) and inorganic phosphate. This chain is Pyridoxine 5'-phosphate synthase, found in Thermosynechococcus vestitus (strain NIES-2133 / IAM M-273 / BP-1).